A 267-amino-acid polypeptide reads, in one-letter code: 3-methyl-2-oxobutanoate hydroxymethyltransferase (267 aa).

Mg(2+) is bound by residues Asp46 and Asp85. 3-methyl-2-oxobutanoate-binding positions include 46–47, Asp85, and Lys115; that span reads DS. Glu117 serves as a coordination point for Mg(2+). Catalysis depends on Glu184, which acts as the Proton acceptor.

This sequence belongs to the PanB family. As to quaternary structure, homodecamer; pentamer of dimers. It depends on Mg(2+) as a cofactor.

It is found in the cytoplasm. The enzyme catalyses 3-methyl-2-oxobutanoate + (6R)-5,10-methylene-5,6,7,8-tetrahydrofolate + H2O = 2-dehydropantoate + (6S)-5,6,7,8-tetrahydrofolate. Its pathway is cofactor biosynthesis; (R)-pantothenate biosynthesis; (R)-pantoate from 3-methyl-2-oxobutanoate: step 1/2. Functionally, catalyzes the reversible reaction in which hydroxymethyl group from 5,10-methylenetetrahydrofolate is transferred onto alpha-ketoisovalerate to form ketopantoate. The sequence is that of 3-methyl-2-oxobutanoate hydroxymethyltransferase from Citrifermentans bemidjiense (strain ATCC BAA-1014 / DSM 16622 / JCM 12645 / Bem) (Geobacter bemidjiensis).